We begin with the raw amino-acid sequence, 203 residues long: Pyridoxal 5'-phosphate synthase subunit PdxT (203 aa).

Gly49–Ser51 is a binding site for L-glutamine. Residue Cys81 is the Nucleophile of the active site. L-glutamine is bound by residues Arg110 and Ile139–Arg140. Residues His175 and Glu177 each act as charge relay system in the active site.

It belongs to the glutaminase PdxT/SNO family. In terms of assembly, in the presence of PdxS, forms a dodecamer of heterodimers. Only shows activity in the heterodimer.

The enzyme catalyses aldehydo-D-ribose 5-phosphate + D-glyceraldehyde 3-phosphate + L-glutamine = pyridoxal 5'-phosphate + L-glutamate + phosphate + 3 H2O + H(+). It catalyses the reaction L-glutamine + H2O = L-glutamate + NH4(+). Its pathway is cofactor biosynthesis; pyridoxal 5'-phosphate biosynthesis. In terms of biological role, catalyzes the hydrolysis of glutamine to glutamate and ammonia as part of the biosynthesis of pyridoxal 5'-phosphate. The resulting ammonia molecule is channeled to the active site of PdxS. The protein is Pyridoxal 5'-phosphate synthase subunit PdxT of Parafrankia sp. (strain EAN1pec).